A 246-amino-acid polypeptide reads, in one-letter code: ATP synthase subunit a, chloroplastic (246 aa).

The next 5 helical transmembrane spans lie at 35–55 (AQVL…TFLA), 94–114 (IPFI…GALI), 132–152 (DINT…YAGL), 198–218 (LVVA…MMFL), and 219–239 (GLFT…AYIG).

The protein belongs to the ATPase A chain family. As to quaternary structure, F-type ATPases have 2 components, CF(1) - the catalytic core - and CF(0) - the membrane proton channel. CF(1) has five subunits: alpha(3), beta(3), gamma(1), delta(1), epsilon(1). CF(0) has four main subunits: a, b, b' and c.

The protein resides in the plastid. It is found in the chloroplast thylakoid membrane. Its function is as follows. Key component of the proton channel; it plays a direct role in the translocation of protons across the membrane. The protein is ATP synthase subunit a, chloroplastic of Chara vulgaris (Common stonewort).